A 255-amino-acid polypeptide reads, in one-letter code: Imidazole glycerol phosphate synthase subunit HisF (255 aa).

Active-site residues include Asp-11 and Asp-130.

This sequence belongs to the HisA/HisF family. Heterodimer of HisH and HisF.

The protein resides in the cytoplasm. The enzyme catalyses 5-[(5-phospho-1-deoxy-D-ribulos-1-ylimino)methylamino]-1-(5-phospho-beta-D-ribosyl)imidazole-4-carboxamide + L-glutamine = D-erythro-1-(imidazol-4-yl)glycerol 3-phosphate + 5-amino-1-(5-phospho-beta-D-ribosyl)imidazole-4-carboxamide + L-glutamate + H(+). It functions in the pathway amino-acid biosynthesis; L-histidine biosynthesis; L-histidine from 5-phospho-alpha-D-ribose 1-diphosphate: step 5/9. IGPS catalyzes the conversion of PRFAR and glutamine to IGP, AICAR and glutamate. The HisF subunit catalyzes the cyclization activity that produces IGP and AICAR from PRFAR using the ammonia provided by the HisH subunit. In Exiguobacterium sp. (strain ATCC BAA-1283 / AT1b), this protein is Imidazole glycerol phosphate synthase subunit HisF.